The primary structure comprises 203 residues: Urease accessory protein UreG (203 aa).

12-19 (GPVGSGKT) contacts GTP.

The protein belongs to the SIMIBI class G3E GTPase family. UreG subfamily. Homodimer. UreD, UreF and UreG form a complex that acts as a GTP-hydrolysis-dependent molecular chaperone, activating the urease apoprotein by helping to assemble the nickel containing metallocenter of UreC. The UreE protein probably delivers the nickel.

Its subcellular location is the cytoplasm. Facilitates the functional incorporation of the urease nickel metallocenter. This process requires GTP hydrolysis, probably effectuated by UreG. The protein is Urease accessory protein UreG of Alteromonas mediterranea (strain DSM 17117 / CIP 110805 / LMG 28347 / Deep ecotype).